A 60-amino-acid chain; its full sequence is Large ribosomal subunit protein bL32 (60 aa).

This sequence belongs to the bacterial ribosomal protein bL32 family.

This Clostridium perfringens (strain ATCC 13124 / DSM 756 / JCM 1290 / NCIMB 6125 / NCTC 8237 / Type A) protein is Large ribosomal subunit protein bL32.